We begin with the raw amino-acid sequence, 449 residues long: Hyaluronidase-4 (449 aa).

The signal sequence occupies residues 1–23 (MYHIWIKFLAAWIFLKRFNGVHV). 2 cysteine pairs are disulfide-bonded: cysteine 47-cysteine 340 and cysteine 211-cysteine 227. N-linked (GlcNAc...) asparagine glycosylation is found at asparagine 67, asparagine 103, and asparagine 111. Catalysis depends on glutamate 135, which acts as the Proton donor. A glycan (N-linked (GlcNAc...) asparagine) is linked at asparagine 153. Asparagine 357 carries N-linked (GlcNAc...) asparagine glycosylation. 3 disulfides stabilise this stretch: cysteine 365/cysteine 376, cysteine 370/cysteine 427, and cysteine 429/cysteine 438. A glycan (N-linked (GlcNAc...) asparagine) is linked at asparagine 401. The EGF-like domain occupies 427-438 (CQCYQGWKGLYC).

It belongs to the glycosyl hydrolase 56 family. As to quaternary structure, monomer. Expressed by the venom gland.

It is found in the secreted. The enzyme catalyses Random hydrolysis of (1-&gt;4)-linkages between N-acetyl-beta-D-glucosamine and D-glucuronate residues in hyaluronate.. In terms of biological role, snake venom endo-hyaluronidase that degrades hyaluronan to smaller oligosaccharide fragments. In venom, it is not toxic by itself, but increases the diffusion of other venom proteins by degrading the extracellular matrix. In addition, it displays antiedematogenic activity. The chain is Hyaluronidase-4 from Cerastes cerastes (Horned desert viper).